The following is a 190-amino-acid chain: Peptidyl-tRNA hydrolase (190 aa).

Tyrosine 14 contacts tRNA. Histidine 19 serves as the catalytic Proton acceptor. Residues tyrosine 64, asparagine 66, and asparagine 112 each coordinate tRNA.

The protein belongs to the PTH family. As to quaternary structure, monomer.

The protein localises to the cytoplasm. It catalyses the reaction an N-acyl-L-alpha-aminoacyl-tRNA + H2O = an N-acyl-L-amino acid + a tRNA + H(+). In terms of biological role, hydrolyzes ribosome-free peptidyl-tRNAs (with 1 or more amino acids incorporated), which drop off the ribosome during protein synthesis, or as a result of ribosome stalling. Functionally, catalyzes the release of premature peptidyl moieties from peptidyl-tRNA molecules trapped in stalled 50S ribosomal subunits, and thus maintains levels of free tRNAs and 50S ribosomes. The protein is Peptidyl-tRNA hydrolase of Chlorobium limicola (strain DSM 245 / NBRC 103803 / 6330).